The following is a 385-amino-acid chain: 1-deoxy-D-xylulose 5-phosphate reductoisomerase (385 aa).

T10, G11, S12, I13, K37, and N124 together coordinate NADPH. K125 serves as a coordination point for 1-deoxy-D-xylulose 5-phosphate. NADPH is bound at residue E126. D150 lines the Mn(2+) pocket. Residues S151, E152, S176, and H199 each coordinate 1-deoxy-D-xylulose 5-phosphate. Mn(2+) is bound at residue E152. G205 lines the NADPH pocket. Residues S212, N217, K218, and E221 each coordinate 1-deoxy-D-xylulose 5-phosphate. Position 221 (E221) interacts with Mn(2+).

It belongs to the DXR family. The cofactor is Mg(2+). It depends on Mn(2+) as a cofactor.

The catalysed reaction is 2-C-methyl-D-erythritol 4-phosphate + NADP(+) = 1-deoxy-D-xylulose 5-phosphate + NADPH + H(+). It functions in the pathway isoprenoid biosynthesis; isopentenyl diphosphate biosynthesis via DXP pathway; isopentenyl diphosphate from 1-deoxy-D-xylulose 5-phosphate: step 1/6. Its function is as follows. Catalyzes the NADPH-dependent rearrangement and reduction of 1-deoxy-D-xylulose-5-phosphate (DXP) to 2-C-methyl-D-erythritol 4-phosphate (MEP). The polypeptide is 1-deoxy-D-xylulose 5-phosphate reductoisomerase (Clostridium botulinum (strain 657 / Type Ba4)).